The primary structure comprises 184 residues: dTTP/UTP pyrophosphatase (184 aa).

Aspartate 65 acts as the Proton acceptor in catalysis.

This sequence belongs to the Maf family. YhdE subfamily. A divalent metal cation is required as a cofactor.

It is found in the cytoplasm. It carries out the reaction dTTP + H2O = dTMP + diphosphate + H(+). The catalysed reaction is UTP + H2O = UMP + diphosphate + H(+). Functionally, nucleoside triphosphate pyrophosphatase that hydrolyzes dTTP and UTP. May have a dual role in cell division arrest and in preventing the incorporation of modified nucleotides into cellular nucleic acids. This Thermococcus onnurineus (strain NA1) protein is dTTP/UTP pyrophosphatase.